The chain runs to 341 residues: Glycerol-3-phosphate dehydrogenase [NAD(P)+] (341 aa).

NADPH-binding residues include Ser-11, Trp-12, Arg-33, and Lys-106. Residues Lys-106, Gly-137, and Ser-139 each coordinate sn-glycerol 3-phosphate. Residue Ala-141 participates in NADPH binding. Positions 192, 245, 255, 256, and 257 each coordinate sn-glycerol 3-phosphate. Lys-192 acts as the Proton acceptor in catalysis. Arg-256 provides a ligand contact to NADPH. Residues Val-280 and Glu-282 each contribute to the NADPH site.

The protein belongs to the NAD-dependent glycerol-3-phosphate dehydrogenase family.

It localises to the cytoplasm. The enzyme catalyses sn-glycerol 3-phosphate + NAD(+) = dihydroxyacetone phosphate + NADH + H(+). It catalyses the reaction sn-glycerol 3-phosphate + NADP(+) = dihydroxyacetone phosphate + NADPH + H(+). It participates in membrane lipid metabolism; glycerophospholipid metabolism. Functionally, catalyzes the reduction of the glycolytic intermediate dihydroxyacetone phosphate (DHAP) to sn-glycerol 3-phosphate (G3P), the key precursor for phospholipid synthesis. The protein is Glycerol-3-phosphate dehydrogenase [NAD(P)+] of Bacillus cytotoxicus (strain DSM 22905 / CIP 110041 / 391-98 / NVH 391-98).